Reading from the N-terminus, the 263-residue chain is Undecaprenyl-diphosphatase 2 (263 aa).

Helical transmembrane passes span 17–37 (TEFLPVSSTGHMILTGHLIGF), 42–62 (AKVFEVVIQLGSILAVVVIFW), 83–103 (LHIIIGMIPAGVLGVLFHSAI), 106–126 (VLFGPGPVVISLVAGGILMIV), 142–162 (ITYKQAFTIGMFQCLALWPGF), 183–203 (AEYTFILAVPMMVAASGLDLI), 216–236 (LFATGFITAFVVAMLAIVSFL), and 242–262 (VKLTPFAYYRFILAAVFYFFI).

Belongs to the UppP family.

It is found in the cell membrane. It carries out the reaction di-trans,octa-cis-undecaprenyl diphosphate + H2O = di-trans,octa-cis-undecaprenyl phosphate + phosphate + H(+). Catalyzes the dephosphorylation of undecaprenyl diphosphate (UPP). Confers resistance to bacitracin. This chain is Undecaprenyl-diphosphatase 2, found in Bacillus anthracis.